The following is a 1509-amino-acid chain: DNA polymerase alpha catalytic subunit (1509 aa).

The interval 1 to 162 (MNRPKREKKS…KKTKEKKNEI (162 aa)) is disordered. Composition is skewed to basic and acidic residues over residues 21–35 (EQIK…RTDQ) and 42–79 (ERKR…RETS). Positions 27–67 (RDGEKRTDQLQEEDDERKRLEQLKEQETEFDKEERKRKNRD) form a coiled coil. The span at 80–123 (DNEDEDEDEDDDGDNSDDDYSLDEDDEDGGGDGENNDSDQEEAI) shows a compositional bias: acidic residues. Residues 127–137 (RKKKRQVKKKS) show a composition bias toward basic residues. Basic and acidic residues predominate over residues 138-147 (KKDENGEPKV). Residues 148–157 (KTPRVKKTKE) show a composition bias toward basic residues. Coiled coils occupy residues 234–263 (APDS…LLNK) and 958–989 (LHGL…IQQQ). Cys1328, Cys1331, Cys1355, Cys1358, Cys1389, Cys1392, Cys1406, and Cys1411 together coordinate Zn(2+). A CysA-type zinc finger spans residues 1328-1358 (CPYCGQNNEFTGIVKIDSEGKSESGFDCNQC). Positions 1389–1411 (CTECEKVSKNYKETSYRCARPQC) match the CysB motif motif.

This sequence belongs to the DNA polymerase type-B family.

The protein resides in the nucleus. The enzyme catalyses DNA(n) + a 2'-deoxyribonucleoside 5'-triphosphate = DNA(n+1) + diphosphate. Functionally, polymerase alpha in a complex with DNA primase is a replicative polymerase. In Dictyostelium discoideum (Social amoeba), this protein is DNA polymerase alpha catalytic subunit (pola1).